The chain runs to 223 residues: Endonuclease V (223 aa).

Asp-35 and Asp-103 together coordinate Mg(2+).

It belongs to the endonuclease V family. Requires Mg(2+) as cofactor.

The protein resides in the cytoplasm. The enzyme catalyses Endonucleolytic cleavage at apurinic or apyrimidinic sites to products with a 5'-phosphate.. Its function is as follows. DNA repair enzyme involved in the repair of deaminated bases. Selectively cleaves double-stranded DNA at the second phosphodiester bond 3' to a deoxyinosine leaving behind the intact lesion on the nicked DNA. The polypeptide is Endonuclease V (Shigella dysenteriae serotype 1 (strain Sd197)).